A 288-amino-acid polypeptide reads, in one-letter code: Phenazine biosynthesis-like domain-containing protein 1 (288 aa).

The active site involves E46.

This sequence belongs to the PhzF family.

This chain is Phenazine biosynthesis-like domain-containing protein 1 (Pbld1), found in Mus musculus (Mouse).